Reading from the N-terminus, the 159-residue chain is Large ribosomal subunit protein uL10 (159 aa).

The protein belongs to the universal ribosomal protein uL10 family. Part of the ribosomal stalk of the 50S ribosomal subunit. The N-terminus interacts with L11 and the large rRNA to form the base of the stalk. The C-terminus forms an elongated spine to which L12 dimers bind in a sequential fashion forming a multimeric L10(L12)X complex.

Its function is as follows. Forms part of the ribosomal stalk, playing a central role in the interaction of the ribosome with GTP-bound translation factors. This Campylobacter lari (strain RM2100 / D67 / ATCC BAA-1060) protein is Large ribosomal subunit protein uL10.